The primary structure comprises 126 residues: UPF0102 protein MXAN_3551 (126 aa).

It belongs to the UPF0102 family.

The chain is UPF0102 protein MXAN_3551 from Myxococcus xanthus (strain DK1622).